Here is a 180-residue protein sequence, read N- to C-terminus: Large ribosomal subunit protein uL18m (180 aa).

It belongs to the universal ribosomal protein uL18 family. In terms of assembly, component of the mitochondrial large ribosomal subunit (mt-LSU). Mature mammalian 55S mitochondrial ribosomes consist of a small (28S) and a large (39S) subunit. The 28S small subunit contains a 12S ribosomal RNA (12S mt-rRNA) and 30 different proteins. The 39S large subunit contains a 16S rRNA (16S mt-rRNA), a copy of mitochondrial valine transfer RNA (mt-tRNA(Val)), which plays an integral structural role, and 52 different proteins.

The protein localises to the mitochondrion. Functionally, together with thiosulfate sulfurtransferase (TST), acts as a mitochondrial import factor for the cytosolic 5S rRNA. The precursor form shows RNA chaperone activity; is able to fold the 5S rRNA into an import-competent conformation that is recognized by rhodanese (TST). Both the cytoplasmic and mitochondrial forms are able to bind to the helix IV-loop D in the gamma domain of the 5S rRNA. This chain is Large ribosomal subunit protein uL18m (MRPL18), found in Homo sapiens (Human).